A 253-amino-acid polypeptide reads, in one-letter code: uncharacterized protein (253 aa).

Belongs to the methyltransferase superfamily.

This is an uncharacterized protein from Mycobacterium avium (strain 104).